The sequence spans 104 residues: Large ribosomal subunit protein bL21 (104 aa).

Belongs to the bacterial ribosomal protein bL21 family. In terms of assembly, part of the 50S ribosomal subunit. Contacts protein L20.

In terms of biological role, this protein binds to 23S rRNA in the presence of protein L20. The chain is Large ribosomal subunit protein bL21 from Streptococcus agalactiae serotype Ia (strain ATCC 27591 / A909 / CDC SS700).